The primary structure comprises 1356 residues: Probable aldehyde oxidase 3 (1356 aa).

The 2Fe-2S ferredoxin-type domain occupies 10 to 97 (RAVVVAVNGE…HCAVTTSEGI (88 aa)). The [2Fe-2S] cluster site is built by cysteine 49, cysteine 54, cysteine 57, and cysteine 79. In terms of domain architecture, FAD-binding PCMH-type spans 245 to 437 (VVVTGDGWFH…TFQTFRAAPR (193 aa)). The tract at residues 552–576 (NGSFTNGTANGIVDSSPEKHSNVDS) is disordered.

Belongs to the xanthine dehydrogenase family. In terms of assembly, aldehyde oxidases (AO) are homodimers and heterodimers of AO subunits. [2Fe-2S] cluster is required as a cofactor. FAD serves as cofactor. It depends on Mo-molybdopterin as a cofactor.

It catalyses the reaction an aldehyde + O2 + H2O = a carboxylate + H2O2 + H(+). This chain is Probable aldehyde oxidase 3, found in Oryza sativa subsp. japonica (Rice).